A 90-amino-acid polypeptide reads, in one-letter code: Probable Fe(2+)-trafficking protein (90 aa).

The protein belongs to the Fe(2+)-trafficking protein family.

Functionally, could be a mediator in iron transactions between iron acquisition and iron-requiring processes, such as synthesis and/or repair of Fe-S clusters in biosynthetic enzymes. The polypeptide is Probable Fe(2+)-trafficking protein (Pseudomonas entomophila (strain L48)).